Reading from the N-terminus, the 194-residue chain is Large ribosomal subunit protein bL9 (194 aa).

Belongs to the bacterial ribosomal protein bL9 family.

Its function is as follows. Binds to the 23S rRNA. This is Large ribosomal subunit protein bL9 from Paracoccus denitrificans (strain Pd 1222).